A 362-amino-acid chain; its full sequence is Phosphoserine aminotransferase (362 aa).

Arg43 is an L-glutamate binding site. Residues 77 to 78, Trp103, Thr153, Asp173, and Gln196 contribute to the pyridoxal 5'-phosphate site; that span reads AS. An N6-(pyridoxal phosphate)lysine modification is found at Lys197. Residue 238-239 coordinates pyridoxal 5'-phosphate; sequence NT.

The protein belongs to the class-V pyridoxal-phosphate-dependent aminotransferase family. SerC subfamily. As to quaternary structure, homodimer. Pyridoxal 5'-phosphate is required as a cofactor.

It is found in the cytoplasm. The enzyme catalyses O-phospho-L-serine + 2-oxoglutarate = 3-phosphooxypyruvate + L-glutamate. It catalyses the reaction 4-(phosphooxy)-L-threonine + 2-oxoglutarate = (R)-3-hydroxy-2-oxo-4-phosphooxybutanoate + L-glutamate. It functions in the pathway amino-acid biosynthesis; L-serine biosynthesis; L-serine from 3-phospho-D-glycerate: step 2/3. The protein operates within cofactor biosynthesis; pyridoxine 5'-phosphate biosynthesis; pyridoxine 5'-phosphate from D-erythrose 4-phosphate: step 3/5. Functionally, catalyzes the reversible conversion of 3-phosphohydroxypyruvate to phosphoserine and of 3-hydroxy-2-oxo-4-phosphonooxybutanoate to phosphohydroxythreonine. This chain is Phosphoserine aminotransferase (serC), found in Niallia circulans (Bacillus circulans).